The chain runs to 126 residues: Methylglyoxal synthase (126 aa).

Residues 1–126 enclose the MGS-like domain; sequence MAGSKCLALI…AIKLLPTLEA (126 aa). Substrate-binding positions include His12, Lys16, 38–41, and 59–60; these read TGTT and SG. Asp65 acts as the Proton donor/acceptor in catalysis. His92 is a binding site for substrate.

It belongs to the methylglyoxal synthase family.

The catalysed reaction is dihydroxyacetone phosphate = methylglyoxal + phosphate. In terms of biological role, catalyzes the formation of methylglyoxal from dihydroxyacetone phosphate. The sequence is that of Methylglyoxal synthase from Rhizobium etli (strain ATCC 51251 / DSM 11541 / JCM 21823 / NBRC 15573 / CFN 42).